The chain runs to 229 residues: Ribonuclease S-6 (229 aa).

The signal sequence occupies residues 1 to 27; sequence MGITGMIYMVPMVFSLIVLISCSSTMG. Residue glutamine 36 participates in RNA binding. Cysteine 42 and cysteine 49 form a disulfide bridge. Histidine 60 serves as a coordination point for RNA. Residue histidine 60 is the Proton donor of the active site. Cysteines 75 and 119 form a disulfide. 2 N-linked (GlcNAc) asparagine glycosylation sites follow: asparagine 77 and asparagine 87. Residues 98–99, phenylalanine 108, 111–112, and 115–116 contribute to the RNA site; these read NV, RQ, and KH. Residue glutamine 112 is part of the active site. Residue histidine 116 is the Proton acceptor of the active site. A glycan (N-linked (GlcNAc...) (high mannose) asparagine) is linked at asparagine 145. 2 cysteine pairs are disulfide-bonded: cysteine 184–cysteine 222 and cysteine 199–cysteine 210. Asparagine 188 carries an N-linked (GlcNAc) asparagine; alternate glycan. Residues asparagine 188 and asparagine 203 are each glycosylated (N-linked (GlcNAc...) asparagine; alternate).

Belongs to the RNase T2 family. The N-glycans attached at Asn-188 and Asn-203 consist of either monosaccharide (GlcNAc) or disaccharide (GlcNAc-GlcNAc) that could not be distinguished.

It catalyses the reaction a ribonucleotidyl-ribonucleotide-RNA + H2O = a 3'-end 3'-phospho-ribonucleotide-RNA + a 5'-end dephospho-ribonucleoside-RNA + H(+). In terms of biological role, self-incompatibility (SI) is the inherited ability of a flowering plant to prevent self-fertilization by discriminating between self and non-self pollen during pollination. In many species, self-incompatibility is controlled by the single, multiallelic locus S. The chain is Ribonuclease S-6 from Pyrus pyrifolia (Chinese pear).